The following is a 38-amino-acid chain: Large ribosomal subunit protein bL36 (38 aa).

It belongs to the bacterial ribosomal protein bL36 family.

The chain is Large ribosomal subunit protein bL36 from Psychrobacter arcticus (strain DSM 17307 / VKM B-2377 / 273-4).